The sequence spans 117 residues: Large ribosomal subunit protein bL20 (117 aa).

Belongs to the bacterial ribosomal protein bL20 family.

Its function is as follows. Binds directly to 23S ribosomal RNA and is necessary for the in vitro assembly process of the 50S ribosomal subunit. It is not involved in the protein synthesizing functions of that subunit. In Mesomycoplasma hyopneumoniae (strain J / ATCC 25934 / NCTC 10110) (Mycoplasma hyopneumoniae), this protein is Large ribosomal subunit protein bL20.